The following is a 286-amino-acid chain: Pantothenate synthetase (286 aa).

31-38 contributes to the ATP binding site; sequence MGALHEGH. Catalysis depends on H38, which acts as the Proton donor. Q65 lines the (R)-pantoate pocket. A beta-alanine-binding site is contributed by Q65. Residue 153–156 participates in ATP binding; it reads GEKD. Q159 provides a ligand contact to (R)-pantoate. 190–193 provides a ligand contact to ATP; sequence LSSR.

Belongs to the pantothenate synthetase family. Homodimer.

It localises to the cytoplasm. The catalysed reaction is (R)-pantoate + beta-alanine + ATP = (R)-pantothenate + AMP + diphosphate + H(+). It functions in the pathway cofactor biosynthesis; (R)-pantothenate biosynthesis; (R)-pantothenate from (R)-pantoate and beta-alanine: step 1/1. Catalyzes the condensation of pantoate with beta-alanine in an ATP-dependent reaction via a pantoyl-adenylate intermediate. The polypeptide is Pantothenate synthetase (Corynebacterium diphtheriae (strain ATCC 700971 / NCTC 13129 / Biotype gravis)).